A 473-amino-acid polypeptide reads, in one-letter code: Ribulose bisphosphate carboxylase large chain 1 (473 aa).

Residues Asn116 and Thr166 each coordinate substrate. The Proton acceptor role is filled by Lys168. Lys170 is a binding site for substrate. Positions 194, 196, and 197 each coordinate Mg(2+). Lys194 is modified (N6-carboxylysine). His287 (proton acceptor) is an active-site residue. Residues Arg288, His320, and Ser372 each contribute to the substrate site.

This sequence belongs to the RuBisCO large chain family. Type I subfamily. In terms of assembly, heterohexadecamer of 8 large chains and 8 small chains. It depends on Mg(2+) as a cofactor.

It catalyses the reaction 2 (2R)-3-phosphoglycerate + 2 H(+) = D-ribulose 1,5-bisphosphate + CO2 + H2O. It carries out the reaction D-ribulose 1,5-bisphosphate + O2 = 2-phosphoglycolate + (2R)-3-phosphoglycerate + 2 H(+). In terms of biological role, ruBisCO catalyzes two reactions: the carboxylation of D-ribulose 1,5-bisphosphate, the primary event in carbon dioxide fixation, as well as the oxidative fragmentation of the pentose substrate. Both reactions occur simultaneously and in competition at the same active site. The protein is Ribulose bisphosphate carboxylase large chain 1 of Nitrobacter winogradskyi (strain ATCC 25391 / DSM 10237 / CIP 104748 / NCIMB 11846 / Nb-255).